The following is a 419-amino-acid chain: MSENIQSVRGMNDCLPDAADAWQGFEAIVRDWLRRYGYREMRTPILEHTGLFKRAIGEVTDIVEKEMYTFVDELNGESLTLRPEGTASSVRAVIQHNLLYDGGKRLWYSGPMFRHERPQKGRYRQFHQVGVEALGFAGPDVDAELIVMCADLWRELGIAPTLQLNTLGDHGARQRHRSKLIAYYEAHRDVLDADAQRRLHSNPLRILDSKNPAMQALNAEAPRLLDELEDEALNHFDALQGLLRANGIAFEINPRLVRGLDYYNRTVFEWVTDQLGAQGTVCAGGRYDGLVEQLGGKPAPAAGFAMGIERLLALVETSGKPIVPAVPDAYIVHAGDTADAFAWQAAATLRGAGLAVVLHCGGGSFKSQMKKADASRARYAVIIGDEEAAAQQVSVKPLRGTAEQTRVELALAIEYLKKA.

This sequence belongs to the class-II aminoacyl-tRNA synthetase family. As to quaternary structure, homodimer.

It localises to the cytoplasm. It carries out the reaction tRNA(His) + L-histidine + ATP = L-histidyl-tRNA(His) + AMP + diphosphate + H(+). The protein is Histidine--tRNA ligase of Thiobacillus denitrificans (strain ATCC 25259 / T1).